The following is a 504-amino-acid chain: Putative F-box/FBD/LRR-repeat protein At3g59240 (504 aa).

Residues 7–60 (KDIISDLPEALICHLLSFVPTKEAALTSLLSEKWRYLFAFAPILDFDDSVWMQS) enclose the F-box domain. LRR repeat units lie at residues 69–95 (HRKF…SLNC), 145–171 (RIRT…DLSS), 173–198 (WFRD…TMSD), 286–312 (TNLF…TFCC), 329–354 (DKDV…VFKG), 369–396 (CLCK…KFGE), and 403–428 (DEEK…ILHY). The FBD domain maps to 382–427 (SSSPVKVLKILKFGEVASYFGDEEKQLELVKYFLETMPNLEQMILH).

This Arabidopsis thaliana (Mouse-ear cress) protein is Putative F-box/FBD/LRR-repeat protein At3g59240.